The following is a 144-amino-acid chain: Large ribosomal subunit protein uL15 (144 aa).

The segment at 1 to 57 (MLLNTLSPAAGSKHAPKRLGRGVGSGLGKTGGRGHKGQKSRSGGKVRPGFEGGQMPL) is disordered. The segment covering 21 to 31 (RGVGSGLGKTG) has biased composition (gly residues). Residues 32–44 (GRGHKGQKSRSGG) show a composition bias toward basic residues.

Belongs to the universal ribosomal protein uL15 family. In terms of assembly, part of the 50S ribosomal subunit.

Binds to the 23S rRNA. The polypeptide is Large ribosomal subunit protein uL15 (Vibrio cholerae serotype O1 (strain ATCC 39315 / El Tor Inaba N16961)).